Consider the following 1423-residue polypeptide: DNA-directed RNA polymerase subunit beta' (1423 aa).

The Zn(2+) site is built by cysteine 71, cysteine 73, cysteine 86, and cysteine 89. Mg(2+)-binding residues include aspartate 461, aspartate 463, and aspartate 465. Positions 815, 889, 896, and 899 each coordinate Zn(2+).

Belongs to the RNA polymerase beta' chain family. In terms of assembly, the RNAP catalytic core consists of 2 alpha, 1 beta, 1 beta' and 1 omega subunit. When a sigma factor is associated with the core the holoenzyme is formed, which can initiate transcription. Mg(2+) serves as cofactor. The cofactor is Zn(2+).

The catalysed reaction is RNA(n) + a ribonucleoside 5'-triphosphate = RNA(n+1) + diphosphate. DNA-dependent RNA polymerase catalyzes the transcription of DNA into RNA using the four ribonucleoside triphosphates as substrates. The polypeptide is DNA-directed RNA polymerase subunit beta' (Actinobacillus pleuropneumoniae serotype 3 (strain JL03)).